The chain runs to 160 residues: Transcriptional repressor NrdR (160 aa).

A compositionally biased stretch (polar residues) spans 1–11 (MRCPNCNSLDT). The disordered stretch occupies residues 1-20 (MRCPNCNSLDTQVKDSRPTE). Residues 3–34 (CPNCNSLDTQVKDSRPTEDSSVIRRRRVCIAC) fold into a zinc finger. One can recognise an ATP-cone domain in the interval 49–139 (LTVIKRNGRR…VYRNFREAKD (91 aa)).

Belongs to the NrdR family. Zn(2+) serves as cofactor.

Negatively regulates transcription of bacterial ribonucleotide reductase nrd genes and operons by binding to NrdR-boxes. The chain is Transcriptional repressor NrdR from Rhodopseudomonas palustris (strain BisB5).